The chain runs to 330 residues: Ribosomal RNA small subunit methyltransferase H (330 aa).

S-adenosyl-L-methionine contacts are provided by residues 48–50 (GGH), Asp-67, Leu-101, Asp-115, and Gln-122.

Belongs to the methyltransferase superfamily. RsmH family.

It is found in the cytoplasm. It catalyses the reaction cytidine(1402) in 16S rRNA + S-adenosyl-L-methionine = N(4)-methylcytidine(1402) in 16S rRNA + S-adenosyl-L-homocysteine + H(+). Functionally, specifically methylates the N4 position of cytidine in position 1402 (C1402) of 16S rRNA. The protein is Ribosomal RNA small subunit methyltransferase H of Pseudarthrobacter chlorophenolicus (strain ATCC 700700 / DSM 12829 / CIP 107037 / JCM 12360 / KCTC 9906 / NCIMB 13794 / A6) (Arthrobacter chlorophenolicus).